Reading from the N-terminus, the 252-residue chain is T-box transcription factor mls-1 (252 aa).

Positions Leu-40–Glu-210 form a DNA-binding region, T-box.

May interact with unc-37.

It is found in the nucleus. Probable transcription factor required for the cell fate specification of non-striated uterine muscle precursor cells. Furthermore, may function with the transcriptional corepressor unc-37. The protein is T-box transcription factor mls-1 of Caenorhabditis elegans.